A 698-amino-acid chain; its full sequence is Probable xyloglucan glycosyltransferase 2 (698 aa).

Transmembrane regions (helical) follow at residues 124-144 (GFLALSLLALAVELAAYWNGW) and 190-210 (ILLFVIQSMDRLVLCLGCFWI). D272 is a catalytic residue. Residues D331 and D333 each coordinate substrate. D425 is a catalytic residue. 4 helical membrane-spanning segments follow: residues 503-523 (LILPFYSFTLFCVILPLTMFV), 528-548 (LPVWVICYVPVCMSFLNILPS), 653-668 (LALSLLLLTAATRSLL), and 673-693 (IHFYFLLFQGVSFLFVGLDLI).

This sequence belongs to the glycosyltransferase 2 family. Plant cellulose synthase-like C subfamily.

The protein resides in the golgi apparatus membrane. In terms of biological role, probable beta-1,4-glucan synthase rather involved in the synthesis of the xyloglucan backbone than cellulose. Seems to work simultaneously with xyloglucan 6-xylosyltransferase. Xyloglucan is a noncellulosic polysaccharides of plant cell wall and consists of a glucan backbone substituted by xylose, galactose and fucose. The sequence is that of Probable xyloglucan glycosyltransferase 2 (CSLC2) from Oryza sativa subsp. japonica (Rice).